Here is a 395-residue protein sequence, read N- to C-terminus: Elongation factor Tu (395 aa).

The region spanning 10–204 (KPHVNIGTIG…TVDEYIPTPQ (195 aa)) is the tr-type G domain. Positions 19 to 26 (GHVDHGKT) are G1. 19–26 (GHVDHGKT) contacts GTP. Residue threonine 26 participates in Mg(2+) binding. The segment at 60-64 (GITIN) is G2. Positions 81–84 (DAPG) are G3. GTP is bound by residues 81-85 (DAPGH) and 136-139 (NKCD). The tract at residues 136-139 (NKCD) is G4. The G5 stretch occupies residues 174–176 (SAL).

The protein belongs to the TRAFAC class translation factor GTPase superfamily. Classic translation factor GTPase family. EF-Tu/EF-1A subfamily. Monomer.

The protein resides in the cytoplasm. The catalysed reaction is GTP + H2O = GDP + phosphate + H(+). Its function is as follows. GTP hydrolase that promotes the GTP-dependent binding of aminoacyl-tRNA to the A-site of ribosomes during protein biosynthesis. The polypeptide is Elongation factor Tu (Ligilactobacillus salivarius (strain UCC118) (Lactobacillus salivarius)).